Here is a 288-residue protein sequence, read N- to C-terminus: Probable proteasome subunit alpha type-7 (288 aa).

Thr-2 bears the N-acetylthreonine mark. Positions 247–288 (INGDDDEDEDDSDNVMSSDDENAPVATNANATTDQEGDIHLE) are disordered. The segment covering 249–268 (GDDDEDEDDSDNVMSSDDEN) has biased composition (acidic residues). Over residues 269–279 (APVATNANATT) the composition is skewed to low complexity.

This sequence belongs to the peptidase T1A family. The 26S proteasome consists of a 20S proteasome core and two 19S regulatory subunits. The 20S proteasome core is composed of 28 subunits that are arranged in four stacked rings, resulting in a barrel-shaped structure. The two end rings are each formed by seven alpha subunits, and the two central rings are each formed by seven beta subunits. The catalytic chamber with the active sites is on the inside of the barrel. Post-translationally, the alpha and beta forms are probably products of the same gene with different post-translational modifications.

Its subcellular location is the cytoplasm. The protein resides in the nucleus. In terms of biological role, the proteasome degrades poly-ubiquitinated proteins in the cytoplasm and in the nucleus. It is essential for the regulated turnover of proteins and for the removal of misfolded proteins. The proteasome is a multicatalytic proteinase complex that is characterized by its ability to cleave peptides with Arg, Phe, Tyr, Leu, and Glu adjacent to the leaving group at neutral or slightly basic pH. It has an ATP-dependent proteolytic activity. In Saccharomyces cerevisiae (strain ATCC 204508 / S288c) (Baker's yeast), this protein is Probable proteasome subunit alpha type-7 (PRE10).